Here is a 372-residue protein sequence, read N- to C-terminus: F-box/kelch-repeat protein At4g14905 (372 aa).

The 41-residue stretch at 34 to 74 (LHDEIAVSCFARVPRCYYPAISLVCRNFRRLMASPEIYIER) folds into the F-box domain. 3 Kelch repeats span residues 137-183 (ETYV…LIDG), 184-229 (KLYV…FFVM), and 232-280 (KIYR…CMNQ).

This Arabidopsis thaliana (Mouse-ear cress) protein is F-box/kelch-repeat protein At4g14905.